Here is a 257-residue protein sequence, read N- to C-terminus: Imidazole glycerol phosphate synthase subunit HisF (257 aa).

Catalysis depends on residues D11 and D130.

This sequence belongs to the HisA/HisF family. In terms of assembly, heterodimer of HisH and HisF.

The protein localises to the cytoplasm. It catalyses the reaction 5-[(5-phospho-1-deoxy-D-ribulos-1-ylimino)methylamino]-1-(5-phospho-beta-D-ribosyl)imidazole-4-carboxamide + L-glutamine = D-erythro-1-(imidazol-4-yl)glycerol 3-phosphate + 5-amino-1-(5-phospho-beta-D-ribosyl)imidazole-4-carboxamide + L-glutamate + H(+). It functions in the pathway amino-acid biosynthesis; L-histidine biosynthesis; L-histidine from 5-phospho-alpha-D-ribose 1-diphosphate: step 5/9. IGPS catalyzes the conversion of PRFAR and glutamine to IGP, AICAR and glutamate. The HisF subunit catalyzes the cyclization activity that produces IGP and AICAR from PRFAR using the ammonia provided by the HisH subunit. The protein is Imidazole glycerol phosphate synthase subunit HisF of Shewanella sp. (strain MR-4).